The chain runs to 526 residues: Cholesterol side-chain cleavage enzyme, mitochondrial (526 aa).

Residues 1-36 (MLAKGLSLRSVLVKGCQPFLSPTWQGPVLSTGKGAG) constitute a mitochondrion transit peptide. Positions 30–41 (STGKGAGTSTSS) are enriched in low complexity. The interval 30 to 49 (STGKGAGTSTSSPRSFNEIP) is disordered. Cys458 contributes to the heme binding site.

It belongs to the cytochrome P450 family. Interacts with FDX1/adrenodoxin. It depends on heme as a cofactor.

The protein resides in the mitochondrion inner membrane. It catalyses the reaction 6 reduced [adrenodoxin] + cholesterol + 3 O2 + 6 H(+) = 4-methylpentanal + pregnenolone + 6 oxidized [adrenodoxin] + 4 H2O. It carries out the reaction 2 reduced [adrenodoxin] + cholesterol + O2 + 2 H(+) = (22R)-hydroxycholesterol + 2 oxidized [adrenodoxin] + H2O. The enzyme catalyses (22R)-hydroxycholesterol + 2 reduced [adrenodoxin] + O2 + 2 H(+) = (20R,22R)-20,22-dihydroxycholesterol + 2 oxidized [adrenodoxin] + H2O. The catalysed reaction is (20R,22R)-20,22-dihydroxycholesterol + 2 reduced [adrenodoxin] + O2 + 2 H(+) = 4-methylpentanal + pregnenolone + 2 oxidized [adrenodoxin] + 2 H2O. Its pathway is lipid metabolism; C21-steroid hormone metabolism. The protein operates within steroid metabolism; cholesterol metabolism. Its function is as follows. A cytochrome P450 monooxygenase that catalyzes the side-chain hydroxylation and cleavage of cholesterol to pregnenolone, the precursor of most steroid hormones. Catalyzes three sequential oxidation reactions of cholesterol, namely the hydroxylation at C22 followed with the hydroxylation at C20 to yield 20R,22R-hydroxycholesterol that is further cleaved between C20 and C22 to yield the C21-steroid pregnenolone and 4-methylpentanal. Mechanistically, uses molecular oxygen inserting one oxygen atom into a substrate and reducing the second into a water molecule. Two electrons are provided by NADPH via a two-protein mitochondrial transfer system comprising flavoprotein FDXR (adrenodoxin/ferredoxin reductase) and nonheme iron-sulfur protein FDX1 or FDX2 (adrenodoxin/ferredoxin). The polypeptide is Cholesterol side-chain cleavage enzyme, mitochondrial (Mus musculus (Mouse)).